The following is a 267-amino-acid chain: MRAGEALRRLGERRPLVHHITNYVSVGLVANATLCTGALPVMAHAREEVAEMSGAAGALVLNIGTLDERQVESMLAAGRAANERGIPVILDPVGAGATALRTRTAGRLLSELEVSAVCGNAGEIATLAGLAAEVRGVESIGGDAREAALKAASSLGLTVAATGAVDYVCGGGRALAVENGHPLLGRVVGSGCASTAVVGCFAAAAGSADPETVAHALAYFGCAGEEAARGAGGPGTFEARLLDALAALSSDPSRLSGRLRVGDAGAG.

Methionine 42 is a substrate binding site. ATP is bound by residues cysteine 118 and threonine 162. Glycine 189 serves as a coordination point for substrate.

This sequence belongs to the Thz kinase family. It depends on Mg(2+) as a cofactor.

It carries out the reaction 5-(2-hydroxyethyl)-4-methylthiazole + ATP = 4-methyl-5-(2-phosphooxyethyl)-thiazole + ADP + H(+). It participates in cofactor biosynthesis; thiamine diphosphate biosynthesis; 4-methyl-5-(2-phosphoethyl)-thiazole from 5-(2-hydroxyethyl)-4-methylthiazole: step 1/1. In terms of biological role, catalyzes the phosphorylation of the hydroxyl group of 4-methyl-5-beta-hydroxyethylthiazole (THZ). The polypeptide is Hydroxyethylthiazole kinase (Rubrobacter xylanophilus (strain DSM 9941 / JCM 11954 / NBRC 16129 / PRD-1)).